The chain runs to 491 residues: uncharacterized protein (491 aa).

This is an uncharacterized protein from Schizosaccharomyces pombe (strain 972 / ATCC 24843) (Fission yeast).